A 311-amino-acid chain; its full sequence is MVDHQWTPLQKEVISGLSAGSVTTLVVHPLDLLKVRLQLSATSAQKAHYGPFMVIKEIIRSSANSGRSVTNELYRGLSINLFGNAIAWGVYFGLYGVTKELIYKSVAKPGETQLKGVGNDHKMNSLIYLSAGASSGLMTAILTNPIWVIKTRIMSTSKGAQGAYTSMYNGVQQLLRTDGFQGLWKGLVPALFGVSQGALYFAVYDTLKQRKLRRKRENGLDIHLTNLETIEITSLGKMVSVTLVYPFQLLKSNLQSFRANEQKFRLFPLIKLIIANDGFVGLYKGLSANLVRAIPSTCITFCVYENLKHRL.

3 Solcar repeats span residues 7-101 (TPLQ…TKEL), 123-210 (MNSL…LKQR), and 224-310 (LTNL…LKHR). 6 helical membrane-spanning segments follow: residues 13 to 33 (VISGLSAGSVTTLVVHPLDLL), 77 to 97 (LSINLFGNAIAWGVYFGLYGV), 129 to 149 (LSAGASSGLMTAILTNPIWVI), 183 to 203 (LWKGLVPALFGVSQGALYFAV), 230 to 250 (IEITSLGKMVSVTLVYPFQLL), and 266 to 286 (LFPLIKLIIANDGFVGLYKGL).

Belongs to the mitochondrial carrier (TC 2.A.29) family.

It is found in the mitochondrion inner membrane. Functionally, transport of FAD from the cytosol to the mitochondrial matrix. This is Mitochondrial FAD carrier protein FLX1 (FLX1) from Saccharomyces cerevisiae (strain ATCC 204508 / S288c) (Baker's yeast).